The sequence spans 166 residues: Endoribonuclease YbeY (166 aa).

Zn(2+) is bound by residues His-111, His-115, and His-121. A disordered region spans residues 140 to 166 (ELGYPDPYADDESADPPHSDTPSKDHE). Positions 154 to 166 (DPPHSDTPSKDHE) are enriched in basic and acidic residues.

This sequence belongs to the endoribonuclease YbeY family. Zn(2+) serves as cofactor.

The protein resides in the cytoplasm. Its function is as follows. Single strand-specific metallo-endoribonuclease involved in late-stage 70S ribosome quality control and in maturation of the 3' terminus of the 16S rRNA. In Pseudomonas syringae pv. syringae (strain B728a), this protein is Endoribonuclease YbeY.